The sequence spans 285 residues: Ribosomal protein L11 methyltransferase (285 aa).

Residues Thr-131, Gly-154, Asp-176, and Asn-223 each contribute to the S-adenosyl-L-methionine site.

It belongs to the methyltransferase superfamily. PrmA family.

Its subcellular location is the cytoplasm. It carries out the reaction L-lysyl-[protein] + 3 S-adenosyl-L-methionine = N(6),N(6),N(6)-trimethyl-L-lysyl-[protein] + 3 S-adenosyl-L-homocysteine + 3 H(+). In terms of biological role, methylates ribosomal protein L11. This Brucella suis (strain ATCC 23445 / NCTC 10510) protein is Ribosomal protein L11 methyltransferase.